The chain runs to 457 residues: Peptidyl-prolyl cis-trans isomerase FKBP5 (457 aa).

M1 carries the N-acetylmethionine modification. Basic and acidic residues predominate over residues 1–11 (MTTDEGAKNNE). Residues 1–24 (MTTDEGAKNNEESPTATVAEQGED) are disordered. Phosphoserine is present on S13. The residue at position 28 (K28) is an N6-acetyllysine. Residues 42–130 (NGEETPMIGD…KIPSNATLFF (89 aa)) enclose the PPIase FKBP-type 1 domain. An N6-acetyllysine modification is found at K155. The PPIase FKBP-type 2 domain maps to 157-243 (EGYSNPNEGA…GIEPNAELIY (87 aa)). TPR repeat units lie at residues 268–301 (AAIV…LEME), 317–350 (LAAF…DSAN), and 351–384 (EKGL…NPQN). The interval 420-457 (DAKEEANKAMGKKTSEGVTNEKGTDSQAMEEEKPEGHV) is disordered. S445 carries the post-translational modification Phosphoserine.

In terms of assembly, part of a heteromultimeric cytoplasmic complex with HSP90AA1, HSPA1A/HSPA1B and steroid receptors. Upon ligand binding dissociates from the complex and FKBP4 takes its place. Interacts with functionally mature heterooligomeric progesterone receptor complexes along with HSP90 and TEBP. Interacts with NR3C1. Interacts with Akt/AKT1 and PHLPP1; enhancing dephosphorylation and subsequent activation of Akt/AKT1. Interacts with IFI44L; this interaction modulates the kinase activity of IKBKB and IKBKE. Interacts with IKBKB and IKBKE. Post-translationally, acetylation impairs ability to promote interaction between Akt/AKT1 and PHLPP1. Deacetylation by SIRT7 promotes interaction between Akt/AKT1 and PHLPP1, leading to suppress Akt/AKT1 activation. Ubiquitinated, leading to degradation in a proteasome-dependent manner. Deubiquitinated by USP49, leading to stabilization. Widely expressed, enriched in testis compared to other tissues.

The protein localises to the cytoplasm. The protein resides in the nucleus. It catalyses the reaction [protein]-peptidylproline (omega=180) = [protein]-peptidylproline (omega=0). With respect to regulation, inhibited by both FK506 and rapamycin. Functionally, immunophilin protein with PPIase and co-chaperone activities. Component of unligated steroid receptors heterocomplexes through interaction with heat-shock protein 90 (HSP90). Plays a role in the intracellular trafficking of heterooligomeric forms of steroid hormone receptors maintaining the complex into the cytoplasm when unliganded. Acts as a regulator of Akt/AKT1 activity by promoting the interaction between Akt/AKT1 and PHLPP1, thereby enhancing dephosphorylation and subsequent activation of Akt/AKT1. Interacts with IKBKE and IKBKB which facilitates IKK complex assembly leading to increased IKBKE and IKBKB kinase activity, NF-kappa-B activation, and IFN production. The sequence is that of Peptidyl-prolyl cis-trans isomerase FKBP5 (FKBP5) from Homo sapiens (Human).